The chain runs to 514 residues: Glutamyl-tRNA(Gln) amidotransferase subunit B, mitochondrial (514 aa).

This sequence belongs to the GatB/GatE family. GatB subfamily. As to quaternary structure, subunit of the heterotrimeric GatCAB amidotransferase (AdT) complex, composed of A, B and C subunits.

The protein resides in the mitochondrion. It catalyses the reaction L-glutamyl-tRNA(Gln) + L-glutamine + ATP + H2O = L-glutaminyl-tRNA(Gln) + L-glutamate + ADP + phosphate + H(+). In terms of biological role, allows the formation of correctly charged Gln-tRNA(Gln) through the transamidation of misacylated Glu-tRNA(Gln) in the mitochondria. The reaction takes place in the presence of glutamine and ATP through an activated gamma-phospho-Glu-tRNA(Gln). The chain is Glutamyl-tRNA(Gln) amidotransferase subunit B, mitochondrial from Naegleria gruberi (Amoeba).